Here is a 556-residue protein sequence, read N- to C-terminus: Formate--tetrahydrofolate ligase (556 aa).

65-72 (TPAGEGKS) provides a ligand contact to ATP.

This sequence belongs to the formate--tetrahydrofolate ligase family.

It catalyses the reaction (6S)-5,6,7,8-tetrahydrofolate + formate + ATP = (6R)-10-formyltetrahydrofolate + ADP + phosphate. Its pathway is one-carbon metabolism; tetrahydrofolate interconversion. The chain is Formate--tetrahydrofolate ligase from Streptococcus pneumoniae (strain ATCC 700669 / Spain 23F-1).